We begin with the raw amino-acid sequence, 136 residues long: Phosphoribosyl-AMP cyclohydrolase (136 aa).

Residue aspartate 89 participates in Mg(2+) binding. Residue cysteine 90 coordinates Zn(2+). Residues aspartate 91 and aspartate 93 each contribute to the Mg(2+) site. Zn(2+) is bound by residues cysteine 106 and cysteine 113.

This sequence belongs to the PRA-CH family. Homodimer. It depends on Mg(2+) as a cofactor. The cofactor is Zn(2+).

Its subcellular location is the cytoplasm. The enzyme catalyses 1-(5-phospho-beta-D-ribosyl)-5'-AMP + H2O = 1-(5-phospho-beta-D-ribosyl)-5-[(5-phospho-beta-D-ribosylamino)methylideneamino]imidazole-4-carboxamide. It participates in amino-acid biosynthesis; L-histidine biosynthesis; L-histidine from 5-phospho-alpha-D-ribose 1-diphosphate: step 3/9. In terms of biological role, catalyzes the hydrolysis of the adenine ring of phosphoribosyl-AMP. The sequence is that of Phosphoribosyl-AMP cyclohydrolase from Bifidobacterium longum subsp. infantis (strain ATCC 15697 / DSM 20088 / JCM 1222 / NCTC 11817 / S12).